A 200-amino-acid polypeptide reads, in one-letter code: Phospholipase A2 inhibitor gamma subunit B (200 aa).

The signal sequence occupies residues 1 to 19 (MKFLLFCCLFGTFLATGMC). Disulfide bonds link C22/C46, C25/C32, C39/C67, C73/C94, C95/C100, C120/C145, C138/C165, and C171/C191. N31 carries N-linked (GlcNAc...) asparagine glycosylation.

It belongs to the CNF-like-inhibitor family. As to quaternary structure, heterodimer of subunit A and subunit B. N-glycosylated. In terms of tissue distribution, expressed by the liver. Not expressed in esophagus, stomach, pancreas, spleen, gall bladder, small intestine, rectum, kidney, trachea, lung, testis and body fat.

The protein localises to the secreted. Its function is as follows. Inhibits the enzymatic activity of phospholipase A2 (PA2). In Elaphe quadrivirgata (Japanese four-lined ratsnake), this protein is Phospholipase A2 inhibitor gamma subunit B.